Reading from the N-terminus, the 576-residue chain is Mycobactin import ATP-binding/permease protein IrtB (576 aa).

Residues 1–25 (MIRTLIALVPADKRGTLGLYTVLTV) are Cytoplasmic-facing. Residues 19 to 299 (LYTVLTVLSV…LSELTPAIES (281 aa)) form the ABC transmembrane type-1 domain. A helical membrane pass occupies residues 26–46 (LSVVIRAAGTVLLVPLVAALF). The Periplasmic portion of the chain corresponds to 47 to 52 (GDTPQD). A helical transmembrane segment spans residues 53–73 (AWPWLGWLTAATAAGWIVDTT). Topologically, residues 74–131 (TSRLGFDLGFAVLDHTQHDVADRMPNIRLDWLTAENTATARAAIASTGPELVGLVVNL) are cytoplasmic. The next 2 helical transmembrane spans lie at 132–152 (LTPL…LVAV) and 153–173 (SPPL…AMWA). Over 174–241 (SNRLSRKADT…RLLAMQIPGQ (68 aa)) the chain is Cytoplasmic. A helical membrane pass occupies residues 242 to 262 (LLFSLASQLALILLAGMATWL). At 263 to 267 (TVRGE) the chain is on the periplasmic side. A helical transmembrane segment spans residues 268–288 (LSVPEAVAMIVVVARYLEPFT). The Cytoplasmic segment spans residues 289–576 (SLSELTPAIE…HEAADWQITH (288 aa)). One can recognise an ABC transporter domain in the interval 332–565 (IEFDCVTFGY…GGRFDEFWRR (234 aa)). 364–371 (GPSGSGKS) is an ATP binding site.

This sequence belongs to the ABC transporter superfamily. Siderophore-Fe(3+) uptake transporter (SIUT) (TC 3.A.1.21) family. Forms a heterodimer with IrtA.

It localises to the cell inner membrane. In terms of biological role, part of the ABC transporter complex IrtAB involved in the import of iron-bound mycobactin (Fe-MBT) and carboxymycobactin (Fe-cMBT). Has a preference for Fe-MBT over Fe-cMBT. Transmembrane domains (TMD) form a pore in the membrane and the ATP-binding domain (NBD) is responsible for energy generation. The polypeptide is Mycobactin import ATP-binding/permease protein IrtB (Mycolicibacterium smegmatis (strain ATCC 700084 / mc(2)155) (Mycobacterium smegmatis)).